Consider the following 860-residue polypeptide: Leucine--tRNA ligase (860 aa).

Positions Pro42–His52 match the 'HIGH' region motif. A 'KMSKS' region motif is present at residues Lys619–Ser623. Residue Lys622 participates in ATP binding.

The protein belongs to the class-I aminoacyl-tRNA synthetase family.

It is found in the cytoplasm. The enzyme catalyses tRNA(Leu) + L-leucine + ATP = L-leucyl-tRNA(Leu) + AMP + diphosphate. This chain is Leucine--tRNA ligase, found in Escherichia coli O157:H7.